The primary structure comprises 597 residues: Probable translation initiation factor IF-2 (597 aa).

The tr-type G domain occupies 4–221; sequence IRQPIIAVLG…LIAGLSQKYL (218 aa). The G1 stretch occupies residues 13–20; the sequence is GHVDHGKT. Residue 13-20 participates in GTP binding; sequence GHVDHGKT. The interval 38-42 is G2; that stretch reads GITQH. The interval 77 to 80 is G3; it reads DTPG. Residues 77-81 and 131-134 contribute to the GTP site; these read DTPGH and NKID. Positions 131 to 134 are G4; that stretch reads NKID. A G5 region spans residues 199–201; the sequence is SAK.

This sequence belongs to the TRAFAC class translation factor GTPase superfamily. Classic translation factor GTPase family. IF-2 subfamily.

In terms of biological role, function in general translation initiation by promoting the binding of the formylmethionine-tRNA to ribosomes. Seems to function along with eIF-2. This is Probable translation initiation factor IF-2 from Thermococcus onnurineus (strain NA1).